The sequence spans 158 residues: Transcription elongation factor GreA (158 aa).

Residues 53-73 (EQQGFIEGRIKEIEAKLSNAQ) adopt a coiled-coil conformation.

The protein belongs to the GreA/GreB family.

Functionally, necessary for efficient RNA polymerase transcription elongation past template-encoded arresting sites. The arresting sites in DNA have the property of trapping a certain fraction of elongating RNA polymerases that pass through, resulting in locked ternary complexes. Cleavage of the nascent transcript by cleavage factors such as GreA or GreB allows the resumption of elongation from the new 3'terminus. GreA releases sequences of 2 to 3 nucleotides. This is Transcription elongation factor GreA from Thioalkalivibrio sulfidiphilus (strain HL-EbGR7).